Here is a 370-residue protein sequence, read N- to C-terminus: MEISTLTTILDTTLAVIFTWVAYKTGQIIWKYTPYSYPNARIRAMEARLLTDQRFSELAESKTLQNFVVSLEDTDYSPRLASLQSYNLYEIERALDLSLVDLVELMIKIMPKRIRGLFEILLEEWDVRNITNVIKAKLSNLPPQDFIIPAGRMFPKVKAMVESKTMEEILVILEGTEYEEPLRKLLLKEIDLQAFELELYKIYYSKLLKYASSRKGEEKLISEEFIKMLIDYRNISIILRAKLSGMPSEEIKSLLIPGGMLSRAVLESMLSSEDVMMALGELEGTRYGDALKDVREAVEGGRIDKVEEALRRYILNRMKELSQFYPLSVAVALTYLLERESEVRKLKAVAKLIEDKAKPEKIKELIGEMA.

It belongs to the V-ATPase V0D/AC39 subunit family. Has multiple subunits with at least A(3), B(3), C, D, E, F, H, I and proteolipid K(x).

Its subcellular location is the cell membrane. Functionally, component of the A-type ATP synthase that produces ATP from ADP in the presence of a proton gradient across the membrane. This is A-type ATP synthase subunit C from Pyrococcus horikoshii (strain ATCC 700860 / DSM 12428 / JCM 9974 / NBRC 100139 / OT-3).